The primary structure comprises 327 residues: Phenylalanine--tRNA ligase alpha subunit (327 aa).

Residue Glu252 coordinates Mg(2+).

It belongs to the class-II aminoacyl-tRNA synthetase family. Phe-tRNA synthetase alpha subunit type 1 subfamily. As to quaternary structure, tetramer of two alpha and two beta subunits. Mg(2+) serves as cofactor.

It is found in the cytoplasm. It carries out the reaction tRNA(Phe) + L-phenylalanine + ATP = L-phenylalanyl-tRNA(Phe) + AMP + diphosphate + H(+). The sequence is that of Phenylalanine--tRNA ligase alpha subunit from Shewanella baltica (strain OS185).